Reading from the N-terminus, the 565-residue chain is Sulfite reductase [NADPH] hemoprotein beta-component (565 aa).

The [4Fe-4S] cluster site is built by Cys-429, Cys-435, Cys-474, and Cys-478. Residue Cys-478 participates in siroheme binding.

The protein belongs to the nitrite and sulfite reductase 4Fe-4S domain family. In terms of assembly, alpha(8)-beta(8). The alpha component is a flavoprotein, the beta component is a hemoprotein. Requires siroheme as cofactor. [4Fe-4S] cluster is required as a cofactor.

The enzyme catalyses hydrogen sulfide + 3 NADP(+) + 3 H2O = sulfite + 3 NADPH + 4 H(+). It functions in the pathway sulfur metabolism; hydrogen sulfide biosynthesis; hydrogen sulfide from sulfite (NADPH route): step 1/1. Its function is as follows. Component of the sulfite reductase complex that catalyzes the 6-electron reduction of sulfite to sulfide. This is one of several activities required for the biosynthesis of L-cysteine from sulfate. In Shewanella sp. (strain MR-4), this protein is Sulfite reductase [NADPH] hemoprotein beta-component.